A 427-amino-acid chain; its full sequence is 3-phosphoshikimate 1-carboxyvinyltransferase (427 aa).

Residues Lys-22, Ser-23, and Arg-27 each contribute to the 3-phosphoshikimate site. Position 22 (Lys-22) interacts with phosphoenolpyruvate. 2 residues coordinate phosphoenolpyruvate: Gly-96 and Arg-124. 3-phosphoshikimate contacts are provided by Ser-170, Ser-171, Gln-172, Ser-198, Asp-313, Asn-336, and Lys-340. Gln-172 is a phosphoenolpyruvate binding site. The active-site Proton acceptor is the Asp-313. Phosphoenolpyruvate contacts are provided by Arg-344, Arg-386, and Lys-411.

The protein belongs to the EPSP synthase family. In terms of assembly, monomer.

The protein localises to the cytoplasm. It carries out the reaction 3-phosphoshikimate + phosphoenolpyruvate = 5-O-(1-carboxyvinyl)-3-phosphoshikimate + phosphate. It participates in metabolic intermediate biosynthesis; chorismate biosynthesis; chorismate from D-erythrose 4-phosphate and phosphoenolpyruvate: step 6/7. Functionally, catalyzes the transfer of the enolpyruvyl moiety of phosphoenolpyruvate (PEP) to the 5-hydroxyl of shikimate-3-phosphate (S3P) to produce enolpyruvyl shikimate-3-phosphate and inorganic phosphate. This chain is 3-phosphoshikimate 1-carboxyvinyltransferase, found in Aeromonas salmonicida (strain A449).